The sequence spans 595 residues: MGKKQHSKDRMFITKTEWATEWGGAKSKENRTPFKSLPYYCCALTFLPFEDPVCTIDGSVFEITTIVPYIRKFGKHPVTGAPLKGEDLIPLIFHKNSEGEYHCPVLNKVFTEFTHIVAVKTTGNVFCYEAIKELNIKTKNWKELLTEEPFTRADLITIQNPNAVDGKVTVEFDHVKNGLKIDDEELKKMNSDPAYNINVSGDIKHMLADLGTDKAKEIALHGGGGNKARNERAAAIAAILESRSKIKEVSKAEQPKQTYSVVDAASASVFGRSADAAKAGSSDKTAARIAMHMAGDRTPVNSKMVKSRYSSGAASRSFTSSAFTPVTKNDFELIKVEKNPKKKGYVQFQTTHGDLNIELHCDIAPRACENFITLCERGYYNGVAFHRSIRNFMIQGGDPTGTGKGGESIWGKPFKDEPNSKLLHSGRGVVSMANSGPHTNGSQFFVLYKSATHLNYKHTVFGGVVGGLATLAAMENVPVDESDRPLEEIKIIEASVFVNPYTELDEEEEKEKAEKEKNEDKDIEKIGSWYSNPGSGTTEAGAGGGGVGKYLKAMSSTATKDTKGSLDSDISTIGVSKKRKTTASASTGFKDFSSW.

One can recognise a U-box domain in the interval 35-108 (KSLPYYCCAL…GEYHCPVLNK (74 aa)). Positions 342–496 (KKGYVQFQTT…EEIKIIEASV (155 aa)) constitute a PPIase cyclophilin-type domain. 2 disordered regions span residues 503–546 (ELDE…GGGG) and 576–595 (SKKRKTTASASTGFKDFSSW). The segment covering 510–525 (KEKAEKEKNEDKDIEK) has biased composition (basic and acidic residues). The span at 582 to 595 (TASASTGFKDFSSW) shows a compositional bias: polar residues.

It belongs to the cyclophilin-type PPIase family. PPIL2 subfamily. Expressed in leaves, flower buds and stems. Lower levels of expression in roots.

The protein localises to the nucleus. It carries out the reaction [protein]-peptidylproline (omega=180) = [protein]-peptidylproline (omega=0). The catalysed reaction is S-ubiquitinyl-[E2 ubiquitin-conjugating enzyme]-L-cysteine + [acceptor protein]-L-lysine = [E2 ubiquitin-conjugating enzyme]-L-cysteine + N(6)-ubiquitinyl-[acceptor protein]-L-lysine.. The protein operates within protein modification; protein ubiquitination. Its function is as follows. May catalyze the cis-trans isomerization of proline imidic peptide bonds in oligopeptides thereby assisting the folding of proteins. May also function as a chaperone, playing a role in intracellular transport of proteins. May also have a protein ubiquitin ligase activity acting as an E3 ubiquitin protein ligase or as a ubiquitin-ubiquitin ligase promoting elongation of ubiquitin chains on proteins. The protein is Peptidyl-prolyl cis-trans isomerase CYP65 (CYP65) of Arabidopsis thaliana (Mouse-ear cress).